The primary structure comprises 250 residues: 5-oxoprolinase subunit A (250 aa).

Belongs to the LamB/PxpA family. Forms a complex composed of PxpA, PxpB and PxpC.

It carries out the reaction 5-oxo-L-proline + ATP + 2 H2O = L-glutamate + ADP + phosphate + H(+). Catalyzes the cleavage of 5-oxoproline to form L-glutamate coupled to the hydrolysis of ATP to ADP and inorganic phosphate. In Klebsiella pneumoniae (strain 342), this protein is 5-oxoprolinase subunit A.